A 407-amino-acid chain; its full sequence is Phosphonoacetate hydrolase (407 aa).

Positions 25, 64, 202, 206, 241, 242, and 368 each coordinate Zn(2+). Positions 64 and 202 each coordinate substrate. His242 and His368 together coordinate substrate.

The protein belongs to the alkaline phosphatase family. PhnA subfamily. As to quaternary structure, homodimer. The cofactor is Zn(2+).

The catalysed reaction is phosphonoacetate + H2O = acetate + phosphate + H(+). Specifically hydrolyzes phosphonoacetate. Does not have activity on other organophosphonates or acetates. The sequence is that of Phosphonoacetate hydrolase from Pseudomonas cedrina.